Consider the following 140-residue polypeptide: Ubiquitin-like protein ATG12 (140 aa).

The tract at residues 1–52 is disordered; the sequence is MAEEPQTVLQLPPSSAAGGEGLTDVSPETTTPEPPSSAAVSPGTEEPAGDTK. A compositionally biased stretch (low complexity) spans 25-42; sequence VSPETTTPEPPSSAAVSP. Residue Gly-140 forms a Glycyl lysine isopeptide (Gly-Lys) (interchain with K-? in acceptor protein) linkage.

Belongs to the ATG12 family. Forms a conjugate with ATG5. Part of the minor complex composed of 4 sets of ATG12-ATG5 and ATG16L1 (400 kDa); this complex interacts with ATG3 leading to disruption of ATG7 interaction and promotion of ATG8-like proteins lipidation. Forms an 800-kDa complex composed of ATG12-ATG5 and ATG16L2. Interacts with DHX58/RIG-1, IFIH1/MDA5 and MAVS/IPS-1 in monomeric form as well as in ATG12-ATG5 conjugate. The interaction with MAVS is further enhanced upon vesicular stomatitis virus (VSV) infection. Interacts with ATG3; this interaction is essential for phosphatidylethanolamine (PE)-conjugated ATG8-like proteins formation. Interacts with ATG7. Interacts with ATG10. Interacts with TECPR1. Interacts with SH3BGRL. The ATG12-ATG5 conjugate interacts with PDCD6IP (via the BRO1 domain); this interaction is bridged by ATG12 and promotes multiple PDCD6IP-mediated functions such as endolysosomal trafficking, macroautophagy and exosome biogenesis. In terms of processing, acetylated by EP300.

It localises to the cytoplasm. The protein resides in the preautophagosomal structure membrane. In terms of biological role, ubiquitin-like protein involved in autophagy vesicles formation. Conjugation with ATG5 through a ubiquitin-like conjugating system involving also ATG7 as an E1-like activating enzyme and ATG10 as an E2-like conjugating enzyme, is essential for its function. The ATG12-ATG5 conjugate acts as an E3-like enzyme which is required for lipidation of ATG8 family proteins and their association to the vesicle membranes. The ATG12-ATG5 conjugate also negatively regulates the innate antiviral immune response by blocking the type I IFN production pathway through direct association with RARRES3 and MAVS. Also plays a role in translation or delivery of incoming viral RNA to the translation apparatus. As part of the ATG8 conjugation system with ATG5 and ATG16L1, required for recruitment of LRRK2 to stressed lysosomes and induction of LRRK2 kinase activity in response to lysosomal stress. This chain is Ubiquitin-like protein ATG12, found in Pongo abelii (Sumatran orangutan).